Here is a 218-residue protein sequence, read N- to C-terminus: Riboflavin kinase (218 aa).

Residues 1–19 (MFTWTIYVSLLLVLAGTFL) form the signal peptide. Residues Thr72 and Asn74 each contribute to the Mg(2+) site. Glu155 (nucleophile) is an active-site residue.

It belongs to the flavokinase family. It depends on Zn(2+) as a cofactor. Requires Mg(2+) as cofactor.

It is found in the microsome. The protein resides in the mitochondrion inner membrane. The protein localises to the endoplasmic reticulum. It catalyses the reaction riboflavin + ATP = FMN + ADP + H(+). Its pathway is cofactor biosynthesis; FMN biosynthesis; FMN from riboflavin (ATP route): step 1/1. Catalyzes the phosphorylation of riboflavin (vitamin B2) to form flavin mononucleotide (FMN) coenzyme. The protein is Riboflavin kinase (FMN1) of Saccharomyces cerevisiae (strain ATCC 204508 / S288c) (Baker's yeast).